A 476-amino-acid polypeptide reads, in one-letter code: Cysteine--tRNA ligase (476 aa).

C31 is a Zn(2+) binding site. A 'HIGH' region motif is present at residues 33–43 (PTVYNYAHIGN). Residues C211, H236, and E240 each coordinate Zn(2+). The 'KMSKS' region signature appears at 269–273 (KMSKS). Residue K272 coordinates ATP.

It belongs to the class-I aminoacyl-tRNA synthetase family. In terms of assembly, monomer. The cofactor is Zn(2+).

It is found in the cytoplasm. The enzyme catalyses tRNA(Cys) + L-cysteine + ATP = L-cysteinyl-tRNA(Cys) + AMP + diphosphate. The sequence is that of Cysteine--tRNA ligase from Xanthomonas oryzae pv. oryzae (strain MAFF 311018).